Reading from the N-terminus, the 293-residue chain is ATP phosphoribosyltransferase (293 aa).

The protein belongs to the ATP phosphoribosyltransferase family. Long subfamily. Requires Mg(2+) as cofactor.

Its subcellular location is the cytoplasm. It carries out the reaction 1-(5-phospho-beta-D-ribosyl)-ATP + diphosphate = 5-phospho-alpha-D-ribose 1-diphosphate + ATP. The protein operates within amino-acid biosynthesis; L-histidine biosynthesis; L-histidine from 5-phospho-alpha-D-ribose 1-diphosphate: step 1/9. With respect to regulation, feedback inhibited by histidine. Functionally, catalyzes the condensation of ATP and 5-phosphoribose 1-diphosphate to form N'-(5'-phosphoribosyl)-ATP (PR-ATP). Has a crucial role in the pathway because the rate of histidine biosynthesis seems to be controlled primarily by regulation of HisG enzymatic activity. In Nitratidesulfovibrio vulgaris (strain DP4) (Desulfovibrio vulgaris), this protein is ATP phosphoribosyltransferase.